The following is a 448-amino-acid chain: Exodeoxyribonuclease 7 large subunit (448 aa).

It belongs to the XseA family. Heterooligomer composed of large and small subunits.

The protein resides in the cytoplasm. The catalysed reaction is Exonucleolytic cleavage in either 5'- to 3'- or 3'- to 5'-direction to yield nucleoside 5'-phosphates.. Bidirectionally degrades single-stranded DNA into large acid-insoluble oligonucleotides, which are then degraded further into small acid-soluble oligonucleotides. This is Exodeoxyribonuclease 7 large subunit from Shewanella baltica (strain OS223).